The sequence spans 259 residues: TCF3 fusion partner homolog (259 aa).

2 disordered regions span residues 50-72 (GGLG…GRRR) and 141-210 (EDDG…APVQ). Residue S167 is modified to Phosphoserine. Over residues 167 to 178 (SPSQRTTATLDP) the composition is skewed to polar residues. T172 bears the Phosphothreonine mark. S180 and S188 each carry phosphoserine. T203 bears the Phosphothreonine mark. A Glycyl lysine isopeptide (Lys-Gly) (interchain with G-Cter in SUMO2) cross-link involves residue K222. A Phosphoserine modification is found at S255.

Interacts with NOL3; translocates NOL3 into the nucleus and negatively regulated TFPT-induced cell death. Component of the chromatin remodeling INO80 complex; specifically part of a complex module associated with the N-terminus of INO80.

It localises to the nucleus. Its function is as follows. Appears to promote apoptosis in a p53/TP53-independent manner. Putative regulatory component of the chromatin remodeling INO80 complex which is involved in transcriptional regulation, DNA replication and probably DNA repair. In Mus musculus (Mouse), this protein is TCF3 fusion partner homolog (Tfpt).